The sequence spans 351 residues: Uroporphyrinogen decarboxylase (351 aa).

Residues Arg-26–Arg-30, Asp-76, Tyr-153, Ser-208, and His-323 each bind substrate.

It belongs to the uroporphyrinogen decarboxylase family. Homodimer.

Its subcellular location is the cytoplasm. It catalyses the reaction uroporphyrinogen III + 4 H(+) = coproporphyrinogen III + 4 CO2. It functions in the pathway porphyrin-containing compound metabolism; protoporphyrin-IX biosynthesis; coproporphyrinogen-III from 5-aminolevulinate: step 4/4. Its function is as follows. Catalyzes the decarboxylation of four acetate groups of uroporphyrinogen-III to yield coproporphyrinogen-III. The protein is Uroporphyrinogen decarboxylase of Prochlorococcus marinus (strain MIT 9211).